The chain runs to 206 residues: Probable nicotinate-nucleotide adenylyltransferase (206 aa).

It belongs to the NadD family.

It catalyses the reaction nicotinate beta-D-ribonucleotide + ATP + H(+) = deamido-NAD(+) + diphosphate. It participates in cofactor biosynthesis; NAD(+) biosynthesis; deamido-NAD(+) from nicotinate D-ribonucleotide: step 1/1. In terms of biological role, catalyzes the reversible adenylation of nicotinate mononucleotide (NaMN) to nicotinic acid adenine dinucleotide (NaAD). The sequence is that of Probable nicotinate-nucleotide adenylyltransferase from Gloeobacter violaceus (strain ATCC 29082 / PCC 7421).